The sequence spans 204 residues: Holliday junction branch migration complex subunit RuvA (204 aa).

The domain I stretch occupies residues 1 to 64 (MIGKLKGTLE…EEAIRLFGFA (64 aa)). The segment at 65–143 (TRAEQEWFCM…PFEQAVKTVS (79 aa)) is domain II. Positions 144 to 154 (VPQREITHQPA) are flexible linker. The tract at residues 154–204 (AHDALSALMKLGFEREQAARALALAMNALEGEAVSSALLIRHSLKLLSSPT) is domain III.

The protein belongs to the RuvA family. As to quaternary structure, homotetramer. Forms an RuvA(8)-RuvB(12)-Holliday junction (HJ) complex. HJ DNA is sandwiched between 2 RuvA tetramers; dsDNA enters through RuvA and exits via RuvB. An RuvB hexamer assembles on each DNA strand where it exits the tetramer. Each RuvB hexamer is contacted by two RuvA subunits (via domain III) on 2 adjacent RuvB subunits; this complex drives branch migration. In the full resolvosome a probable DNA-RuvA(4)-RuvB(12)-RuvC(2) complex forms which resolves the HJ.

Its subcellular location is the cytoplasm. Functionally, the RuvA-RuvB-RuvC complex processes Holliday junction (HJ) DNA during genetic recombination and DNA repair, while the RuvA-RuvB complex plays an important role in the rescue of blocked DNA replication forks via replication fork reversal (RFR). RuvA specifically binds to HJ cruciform DNA, conferring on it an open structure. The RuvB hexamer acts as an ATP-dependent pump, pulling dsDNA into and through the RuvAB complex. HJ branch migration allows RuvC to scan DNA until it finds its consensus sequence, where it cleaves and resolves the cruciform DNA. This is Holliday junction branch migration complex subunit RuvA from Bartonella tribocorum (strain CIP 105476 / IBS 506).